The sequence spans 52 residues: Phospholamban (52 aa).

N-acetylmethionine is present on Met-1. At 1-31 the chain is on the cytoplasmic side; that stretch reads MEKVQYLTRSAIRRASTIEMPQQARQNLQNL. Phosphoserine; by PKA is present on Ser-16. Phosphothreonine; by CaMK2 is present on Thr-17. A helical transmembrane segment spans residues 32-52; it reads FINFCLILICLLLICIIVMLL. The S-palmitoyl cysteine moiety is linked to residue Cys-36.

This sequence belongs to the phospholamban family. As to quaternary structure, homopentamer. Can also form heterooligomers with other sarcoplasmic/endoplasmic reticulum calcium ATPase (SERCA) regulators ARLN, ERLN, SLN and STRIT1/DWORF. Monomer. Interacts with HAX1. Interacts as a monomer with ATP2A2; the interaction decreases ATP2A2 Ca(2+) affinity. Interacts with VMP1; VMP1 competes with PLN and SLN to prevent them from forming an inhibitory complex with ATP2A2. Interacts with S100A1 in a Ca(2+)-dependent manner. Phosphorylated at Thr-17 by CaMK2, and in response to beta-adrenergic stimulation. Phosphorylation by DMPK may stimulate sarcoplasmic reticulum calcium uptake in cardiomyocytes. Phosphorylation by PKA abolishes the inhibition of ATP2A2-mediated calcium uptake. Post-translationally, palmitoylated by ZDHHC16, promoting formation of the homopentamer. In terms of processing, in elongated spermatids, proteolytically cleaved by SPPL2C which modulates intracellular Ca(2+) homeostasis. In terms of tissue distribution, expressed in testis (at protein level). In brain, expressed specifically in GABAergic GAD67+ neurons of the thalamic reticular nucleus where it colocalizes with ATP2A2/SERCA2 (at protein level). Expressed in the bladder and in the atria and ventricles of the heart.

The protein localises to the endoplasmic reticulum membrane. The protein resides in the sarcoplasmic reticulum membrane. It localises to the mitochondrion membrane. It is found in the membrane. Functionally, reversibly inhibits the activity of ATP2A2/SERCA2 in cardiac sarcoplasmic reticulum by decreasing the apparent affinity of the ATPase for Ca(2+). Binds preferentially to the ATP-bound E1 conformational form of ATP2A2 which predominates at low Ca(2+) concentrations during the diastolic phase of the cardiac cycle. Inhibits ATP2A2 Ca(2+) affinity by disrupting its allosteric activation by ATP. Modulates the contractility of the heart muscle in response to physiological stimuli via its effects on ATP2A2. Modulates calcium re-uptake during muscle relaxation and plays an important role in calcium homeostasis in the heart muscle. The degree of ATP2A2 inhibition depends on the oligomeric state of PLN. ATP2A2 inhibition is alleviated by PLN phosphorylation. Also inhibits the activity of ATP2A3/SERCA3. Controls intracellular Ca(2+) levels in elongated spermatids and may play a role in germ cell differentiation. In the thalamic reticular nucleus of the brain, plays a role in the regulation of sleep patterns and executive functioning. The chain is Phospholamban from Mus musculus (Mouse).